A 397-amino-acid chain; its full sequence is Tryptophan synthase beta chain (397 aa).

At Lys-87 the chain carries N6-(pyridoxal phosphate)lysine.

This sequence belongs to the TrpB family. In terms of assembly, tetramer of two alpha and two beta chains. It depends on pyridoxal 5'-phosphate as a cofactor.

The enzyme catalyses (1S,2R)-1-C-(indol-3-yl)glycerol 3-phosphate + L-serine = D-glyceraldehyde 3-phosphate + L-tryptophan + H2O. It functions in the pathway amino-acid biosynthesis; L-tryptophan biosynthesis; L-tryptophan from chorismate: step 5/5. The beta subunit is responsible for the synthesis of L-tryptophan from indole and L-serine. In Cronobacter sakazakii (strain ATCC BAA-894) (Enterobacter sakazakii), this protein is Tryptophan synthase beta chain.